The following is a 134-amino-acid chain: Large ribosomal subunit protein uL16c (134 aa).

Belongs to the universal ribosomal protein uL16 family. As to quaternary structure, part of the 50S ribosomal subunit.

It is found in the plastid. Its subcellular location is the chloroplast. The polypeptide is Large ribosomal subunit protein uL16c (Pinus koraiensis (Korean pine)).